The sequence spans 253 residues: Triosephosphate isomerase (253 aa).

Substrate is bound at residue 8–10 (NWK). The Electrophile role is filled by His-93. The active-site Proton acceptor is Glu-165. Substrate is bound by residues Gly-171, Ser-210, and 231 to 232 (GG).

This sequence belongs to the triosephosphate isomerase family. Homodimer.

It is found in the cytoplasm. It carries out the reaction D-glyceraldehyde 3-phosphate = dihydroxyacetone phosphate. It functions in the pathway carbohydrate biosynthesis; gluconeogenesis. The protein operates within carbohydrate degradation; glycolysis; D-glyceraldehyde 3-phosphate from glycerone phosphate: step 1/1. In terms of biological role, involved in the gluconeogenesis. Catalyzes stereospecifically the conversion of dihydroxyacetone phosphate (DHAP) to D-glyceraldehyde-3-phosphate (G3P). In Francisella tularensis subsp. mediasiatica (strain FSC147), this protein is Triosephosphate isomerase.